The primary structure comprises 89 residues: Small ribosomal subunit protein uS15 (89 aa).

Positions 1-21 (MAITQERKNQLINEFKTHESD) are enriched in basic and acidic residues. Residues 1 to 24 (MAITQERKNQLINEFKTHESDTGS) are disordered.

This sequence belongs to the universal ribosomal protein uS15 family. Part of the 30S ribosomal subunit. Forms a bridge to the 50S subunit in the 70S ribosome, contacting the 23S rRNA.

Functionally, one of the primary rRNA binding proteins, it binds directly to 16S rRNA where it helps nucleate assembly of the platform of the 30S subunit by binding and bridging several RNA helices of the 16S rRNA. In terms of biological role, forms an intersubunit bridge (bridge B4) with the 23S rRNA of the 50S subunit in the ribosome. This is Small ribosomal subunit protein uS15 from Bacillus subtilis (strain 168).